Consider the following 251-residue polypeptide: Protein crossbronx (251 aa).

In terms of domain architecture, UBC core spans 20–176; the sequence is QQEYKILAEY…TRENIRESLA (157 aa). Residues 211–251 form a disordered region; the sequence is QSKHLESQSQQSNNGGNGGGGGAATGLSWVKEGEFKPLSVE. The segment covering 225 to 234 has biased composition (gly residues); it reads GGNGGGGGAA.

It belongs to the ubiquitin-conjugating enzyme family. FTS subfamily.

This Drosophila willistoni (Fruit fly) protein is Protein crossbronx (cbx).